A 493-amino-acid polypeptide reads, in one-letter code: Glutamyl-tRNA(Gln) amidotransferase subunit A (493 aa).

Catalysis depends on charge relay system residues Lys-79 and Ser-159. The active-site Acyl-ester intermediate is Ser-183.

It belongs to the amidase family. GatA subfamily. Heterotrimer of A, B and C subunits.

The enzyme catalyses L-glutamyl-tRNA(Gln) + L-glutamine + ATP + H2O = L-glutaminyl-tRNA(Gln) + L-glutamate + ADP + phosphate + H(+). In terms of biological role, allows the formation of correctly charged Gln-tRNA(Gln) through the transamidation of misacylated Glu-tRNA(Gln) in organisms which lack glutaminyl-tRNA synthetase. The reaction takes place in the presence of glutamine and ATP through an activated gamma-phospho-Glu-tRNA(Gln). This is Glutamyl-tRNA(Gln) amidotransferase subunit A from Agrobacterium fabrum (strain C58 / ATCC 33970) (Agrobacterium tumefaciens (strain C58)).